Reading from the N-terminus, the 84-residue chain is MKTSMLAVFVALPLAFVLTAATEERAHPNELVNSLVELVKLDAERGVDKEGCKYMFGSCGKSDDCCPKLACKRTFNYCAWDGSV.

Positions 1-21 are cleaved as a signal peptide; that stretch reads MKTSMLAVFVALPLAFVLTAA. A propeptide spanning residues 22–45 is cleaved from the precursor; it reads TEERAHPNELVNSLVELVKLDAER. 3 disulfides stabilise this stretch: cysteine 52/cysteine 66, cysteine 59/cysteine 71, and cysteine 65/cysteine 78.

The protein belongs to the neurotoxin 10 (Hwtx-1) family. 41 (Jztx-36) subfamily. Expressed by the venom gland.

It is found in the secreted. Functionally, omega-conotoxins act at presynaptic membranes, they bind and block voltage-gated calcium channels (Cav). This toxin inhibits barium currents (IBa) mediated by L-type voltage-gated calcium channels Cav1.2/CACNA1C (IC(50)=825 nM) and Cav1.3/CACNA1C (IC(50)=2240 nM). This is Omega-theraphotoxin-Pm1a from Pelinobius muticus (King baboon spider).